The chain runs to 708 residues: Leucine-rich repeat neuronal protein 3 (708 aa).

The first 22 residues, 1–22 (MKDMPLRIHVLLGLAITTLVQA), serve as a signal peptide directing secretion. The region spanning 23 to 69 (VDKKVDCPRLCTCEIRPWFTPRSIYMEASTVDCNDLGLLTFPARLPA) is the LRRNT domain. Topologically, residues 23-628 (VDKKVDCPRL…KEYEKNNTTT (606 aa)) are extracellular. LRR repeat units lie at residues 70–91 (NTQI…TDFP), 93–114 (NLTG…NVKK), 117–138 (QLLS…CLSE), 141–162 (NLQE…AFIG), 165–186 (NLLR…WFDA), 189–210 (NLEI…NFKP), 213–234 (NLRS…ALVG), 237–258 (NLES…ALQK), 261–282 (NLKF…DFSN), 285–304 (HLKE…DSLA), 310–332 (DLRK…AFFR), and 335–358 (KLES…ESLP). 2 N-linked (GlcNAc...) asparagine glycosylation sites follow: Asn-93 and Asn-103. A glycan (N-linked (GlcNAc...) asparagine) is linked at Asn-223. Positions 368-421 (NPIRCDCVIRWMNMNKTNIRFMEPDSLFCVDPPEFQGQNVRQVHFRDMMEICLP) constitute an LRRCT domain. N-linked (GlcNAc...) asparagine glycosylation is present at Asn-382. Positions 421 to 514 (PLIAPESFPS…DLKSVMIKVD (94 aa)) constitute an Ig-like C2-type domain. A disulfide bond links Cys-444 and Cys-496. N-linked (GlcNAc...) asparagine glycans are attached at residues Asn-522, Asn-579, Asn-608, Asn-624, and Asn-625. Positions 523–617 (GSLNIKIRDI…NVTTKGLHPD (95 aa)) constitute a Fibronectin type-III domain. The helical transmembrane segment at 629–649 (LMACLGGLLGIIGVICLISCL) threads the bilayer. The Cytoplasmic segment spans residues 650 to 708 (SPEMNCDGGHSYVRNYLQKPTFALGELYPPLINLWEAGKEKSTSLKVKATVIGLPTNMS).

It is found in the membrane. This chain is Leucine-rich repeat neuronal protein 3 (LRRN3), found in Homo sapiens (Human).